Consider the following 384-residue polypeptide: S-adenosylmethionine synthase (384 aa).

H15 is a binding site for ATP. D17 contacts Mg(2+). Residue E43 participates in K(+) binding. L-methionine-binding residues include E56 and Q99. The flexible loop stretch occupies residues 99-109; that stretch reads QSPDINQGVDK. ATP is bound by residues 164 to 166, 230 to 231, D239, 245 to 246, A262, and K266; these read DAK, RF, and RK. D239 lines the L-methionine pocket. K270 contacts L-methionine.

It belongs to the AdoMet synthase family. As to quaternary structure, homotetramer; dimer of dimers. Mg(2+) is required as a cofactor. The cofactor is K(+).

It is found in the cytoplasm. The enzyme catalyses L-methionine + ATP + H2O = S-adenosyl-L-methionine + phosphate + diphosphate. It functions in the pathway amino-acid biosynthesis; S-adenosyl-L-methionine biosynthesis; S-adenosyl-L-methionine from L-methionine: step 1/1. Its function is as follows. Catalyzes the formation of S-adenosylmethionine (AdoMet) from methionine and ATP. The overall synthetic reaction is composed of two sequential steps, AdoMet formation and the subsequent tripolyphosphate hydrolysis which occurs prior to release of AdoMet from the enzyme. This chain is S-adenosylmethionine synthase, found in Aliivibrio fischeri (strain ATCC 700601 / ES114) (Vibrio fischeri).